Consider the following 929-residue polypeptide: Collagen alpha-1(XII) chain (929 aa).

The VWFA 1 domain occupies 1–49; it reads DVEIFAVGVKDAVRSELEAIATPPTATHVYTVEDFDAFQRISFELTQSI. 6 Fibronectin type-III domains span residues 67-156, 158-250, 251-340, 342-432, 434-521, and 523-613; these read PPRD…LEVR, APRN…VGEP, KNLR…LQER, SPRD…ASPD, KIVK…LSPF, and APRS…TLRD. The N-linked (GlcNAc...) asparagine glycan is linked to Asn-98. O-linked (Xyl...) (chondroitin sulfate) serine glycosylation is found at Ser-231, Ser-324, and Ser-415. The VWFA 2 domain occupies 633 to 805; that stretch reads DIVLLVDGSW…SLLTNIVNDL (173 aa). In terms of domain architecture, Fibronectin type-III 7 spans 821 to 910; that stretch reads PPSNLVTSEP…AGTETTLPIP (90 aa).

This sequence belongs to the fibril-associated collagens with interrupted helices (FACIT) family. Trimer of identical chains each containing 190 kDa of non-triple-helical sequences. In terms of processing, the triple-helical tail is stabilized by disulfide bonds at each end. Prolines at the third position of the tripeptide repeating unit (G-X-Y) are hydroxylated in some or all of the chains.

It is found in the secreted. The protein localises to the extracellular space. The protein resides in the extracellular matrix. In terms of biological role, type XII collagen interacts with type I collagen-containing fibrils, the COL1 domain could be associated with the surface of the fibrils, and the COL2 and NC3 domains may be localized in the perifibrillar matrix. Could play a developmental role in regeneration. In Notophthalmus viridescens (Eastern newt), this protein is Collagen alpha-1(XII) chain.